The sequence spans 91 residues: Large ribosomal subunit protein eL43 (91 aa).

A C4-type zinc finger spans residues 39-60 (CSFCGKEAMKRKATGIWNCAKC).

Belongs to the eukaryotic ribosomal protein eL43 family.

The polypeptide is Large ribosomal subunit protein eL43 (Caenorhabditis elegans).